A 1181-amino-acid polypeptide reads, in one-letter code: 1-phosphatidylinositol 4,5-bisphosphate phosphodiesterase beta-2 (1181 aa).

Residues Gln-312–Lys-463 form the PI-PLC X-box domain. The active site involves His-327. Residues Asn-328, Glu-357, and Asp-359 each coordinate Ca(2+). His-374 is a catalytic residue. Glu-408 contributes to the Ca(2+) binding site. The disordered stretch occupies residues Asn-465–Glu-534. The span at Thr-503–Glu-525 shows a compositional bias: acidic residues. The PI-PLC Y-box domain occupies Met-547–Arg-663. The C2 domain maps to Asp-666–Leu-791. A disordered region spans residues Ser-847 to Leu-890. The segment covering Pro-850–Pro-869 has biased composition (polar residues). A compositionally biased stretch (basic and acidic residues) spans Thr-874–Thr-883. A coiled-coil region spans residues Leu-893–Ala-940. Residue Ser-950 is modified to Phosphoserine. 2 coiled-coil regions span residues Pro-974 to Lys-1026 and His-1075 to Tyr-1141. The disordered stretch occupies residues Glu-1149–Leu-1181. Residues Ala-1150–Glu-1159 show a composition bias toward basic and acidic residues.

As to quaternary structure, interacts with RAC1. Forms a complex composed of at least WDR26, a G-beta:gamma unit, and PLCB2. The cofactor is Ca(2+).

The catalysed reaction is a 1,2-diacyl-sn-glycero-3-phospho-(1D-myo-inositol-4,5-bisphosphate) + H2O = 1D-myo-inositol 1,4,5-trisphosphate + a 1,2-diacyl-sn-glycerol + H(+). It carries out the reaction a 1,2-diacyl-sn-glycero-3-phospho-(1D-myo-inositol) + H2O = 1D-myo-inositol 1-phosphate + a 1,2-diacyl-sn-glycerol + H(+). Functionally, the production of the second messenger molecules diacylglycerol (DAG) and inositol 1,4,5-trisphosphate (IP3) is mediated by activated phosphatidylinositol-specific phospholipase C enzymes. In neutrophils, participates in a phospholipase C-activating N-formyl peptide-activated GPCR (G protein-coupled receptor) signaling pathway by promoting RASGRP4 activation by DAG, to promote neutrophil functional responses. The chain is 1-phosphatidylinositol 4,5-bisphosphate phosphodiesterase beta-2 from Mus musculus (Mouse).